Here is a 423-residue protein sequence, read N- to C-terminus: Gamma-glutamyl phosphate reductase (423 aa).

Belongs to the gamma-glutamyl phosphate reductase family.

It localises to the cytoplasm. The enzyme catalyses L-glutamate 5-semialdehyde + phosphate + NADP(+) = L-glutamyl 5-phosphate + NADPH + H(+). Its pathway is amino-acid biosynthesis; L-proline biosynthesis; L-glutamate 5-semialdehyde from L-glutamate: step 2/2. In terms of biological role, catalyzes the NADPH-dependent reduction of L-glutamate 5-phosphate into L-glutamate 5-semialdehyde and phosphate. The product spontaneously undergoes cyclization to form 1-pyrroline-5-carboxylate. This chain is Gamma-glutamyl phosphate reductase, found in Burkholderia lata (strain ATCC 17760 / DSM 23089 / LMG 22485 / NCIMB 9086 / R18194 / 383).